A 134-amino-acid polypeptide reads, in one-letter code: Rhoptry antigen protein (134 aa).

2 disordered regions span residues methionine 21–lysine 82 and glutamine 96–leucine 134. The span at lysine 29–aspartate 38 shows a compositional bias: polar residues. A compositionally biased stretch (low complexity) spans glutamate 39 to glycine 54. Positions glycine 57–methionine 69 are enriched in basic and acidic residues. Residues proline 102–arginine 113 are compositionally biased toward basic residues. Basic and acidic residues predominate over residues aspartate 114–lysine 126.

The polypeptide is Rhoptry antigen protein (Plasmodium falciparum).